The following is a 251-amino-acid chain: Putative glutamine amidotransferase YLR126C (251 aa).

The 185-residue stretch at 48–232 folds into the Glutamine amidotransferase type-1 domain; it reads EVFHVQKNVF…NRYERQCQEL (185 aa). Catalysis depends on for GATase activity residues C112, H198, and E200.

The protein localises to the cytoplasm. In terms of biological role, may have a role in copper and iron homeostasis. The chain is Putative glutamine amidotransferase YLR126C from Saccharomyces cerevisiae (strain ATCC 204508 / S288c) (Baker's yeast).